We begin with the raw amino-acid sequence, 101 residues long: NAD(P)H-quinone oxidoreductase subunit 4L, chloroplastic (101 aa).

3 helical membrane passes run methionine 2–isoleucine 22, methionine 32–phenylalanine 52, and valine 61–valine 81.

It belongs to the complex I subunit 4L family. NDH is composed of at least 16 different subunits, 5 of which are encoded in the nucleus.

It is found in the plastid. The protein resides in the chloroplast thylakoid membrane. The enzyme catalyses a plastoquinone + NADH + (n+1) H(+)(in) = a plastoquinol + NAD(+) + n H(+)(out). The catalysed reaction is a plastoquinone + NADPH + (n+1) H(+)(in) = a plastoquinol + NADP(+) + n H(+)(out). Functionally, NDH shuttles electrons from NAD(P)H:plastoquinone, via FMN and iron-sulfur (Fe-S) centers, to quinones in the photosynthetic chain and possibly in a chloroplast respiratory chain. The immediate electron acceptor for the enzyme in this species is believed to be plastoquinone. Couples the redox reaction to proton translocation, and thus conserves the redox energy in a proton gradient. This chain is NAD(P)H-quinone oxidoreductase subunit 4L, chloroplastic, found in Nuphar advena (Common spatterdock).